The following is a 436-amino-acid chain: Transcription factor Sox-10 (436 aa).

5 disordered regions span residues 1–55, 145–183, 195–257, 322–346, and 413–436; these read MSDD…ERFP, RLRM…AEGG, HLDH…DFGN, PQTD…QPST, and SPSV…LSRP. Lys44 is covalently cross-linked (Glycyl lysine isopeptide (Lys-Gly) (interchain with G-Cter in SUMO)). The dimerization (DIM) stretch occupies residues 48–88; the sequence is DSEDERFPVCIREAVSQVLSGYDWTLVPMPVRVNGGSKSKP. Positions 90-158 form a DNA-binding region, HMG box; it reads VKRPMNAFMV…QHKKDHPDYK (69 aa). Over residues 145–159 the composition is skewed to basic and acidic residues; that stretch reads RLRMQHKKDHPDYKY. Composition is skewed to polar residues over residues 205–215 and 331–346; these read SDGNSEHSAGQ and KTES…QPST. The tract at residues 209-295 is transactivation domain (TAM); sequence SEHSAGQSHG…NGHAGHPSHI (87 aa). The interval 327 to 436 is transactivation domain (TAC); that stretch reads KAQVKTESSS…QPVYTTLSRP (110 aa). Lys331 is covalently cross-linked (Glycyl lysine isopeptide (Lys-Gly) (interchain with G-Cter in SUMO)).

In terms of assembly, interacts with the sumoylation factors ube2i/ubc9 and sumo1. Sumoylated.

It is found in the cytoplasm. It localises to the nucleus. Functionally, acts early in neural crest formation, functioning redundantly with the other group E Sox factors sox8 and sox9 to induce neural crest progenitors. Acts downstream of wnt-signaling at the neural plate border. Involved in the specification of neural crest progenitors fated to form the pigment cell lineage. In Xenopus tropicalis (Western clawed frog), this protein is Transcription factor Sox-10.